The chain runs to 198 residues: Probable septum site-determining protein MinC (198 aa).

It belongs to the MinC family. As to quaternary structure, interacts with MinD and FtsZ.

Cell division inhibitor that blocks the formation of polar Z ring septums. Rapidly oscillates between the poles of the cell to destabilize FtsZ filaments that have formed before they mature into polar Z rings. Prevents FtsZ polymerization. The sequence is that of Probable septum site-determining protein MinC from Thermosipho melanesiensis (strain DSM 12029 / CIP 104789 / BI429).